The primary structure comprises 467 residues: Glutamate--tRNA ligase (467 aa).

A 'HIGH' region motif is present at residues 10–20; sequence PSPTGYLHVGG. Residues Cys99, Cys101, Cys126, and Glu128 each contribute to the Zn(2+) site. The short motif at 237 to 241 is the 'KMSKS' region element; it reads RLSKR. Residue Lys240 participates in ATP binding.

Belongs to the class-I aminoacyl-tRNA synthetase family. Glutamate--tRNA ligase type 1 subfamily. In terms of assembly, monomer. The cofactor is Zn(2+).

The protein localises to the cytoplasm. It catalyses the reaction tRNA(Glu) + L-glutamate + ATP = L-glutamyl-tRNA(Glu) + AMP + diphosphate. Functionally, catalyzes the attachment of glutamate to tRNA(Glu) in a two-step reaction: glutamate is first activated by ATP to form Glu-AMP and then transferred to the acceptor end of tRNA(Glu). This chain is Glutamate--tRNA ligase, found in Geotalea uraniireducens (strain Rf4) (Geobacter uraniireducens).